We begin with the raw amino-acid sequence, 183 residues long: NAD(P)H-quinone oxidoreductase subunit I, chloroplastic (183 aa).

4Fe-4S ferredoxin-type domains lie at 55-84 (GRIH…VDWE) and 95-124 (TSYS…MTEE). [4Fe-4S] cluster contacts are provided by Cys-64, Cys-67, Cys-70, Cys-74, Cys-104, Cys-107, Cys-110, and Cys-114.

Belongs to the complex I 23 kDa subunit family. In terms of assembly, NDH is composed of at least 16 different subunits, 5 of which are encoded in the nucleus. Requires [4Fe-4S] cluster as cofactor.

Its subcellular location is the plastid. The protein localises to the chloroplast thylakoid membrane. The enzyme catalyses a plastoquinone + NADH + (n+1) H(+)(in) = a plastoquinol + NAD(+) + n H(+)(out). It catalyses the reaction a plastoquinone + NADPH + (n+1) H(+)(in) = a plastoquinol + NADP(+) + n H(+)(out). Functionally, NDH shuttles electrons from NAD(P)H:plastoquinone, via FMN and iron-sulfur (Fe-S) centers, to quinones in the photosynthetic chain and possibly in a chloroplast respiratory chain. The immediate electron acceptor for the enzyme in this species is believed to be plastoquinone. Couples the redox reaction to proton translocation, and thus conserves the redox energy in a proton gradient. This Huperzia lucidula (Shining clubmoss) protein is NAD(P)H-quinone oxidoreductase subunit I, chloroplastic.